The sequence spans 247 residues: Ribonuclease PH (247 aa).

Phosphate is bound by residues Arg87 and 125 to 127 (GTR).

It belongs to the RNase PH family. As to quaternary structure, homohexameric ring arranged as a trimer of dimers.

It catalyses the reaction tRNA(n+1) + phosphate = tRNA(n) + a ribonucleoside 5'-diphosphate. Phosphorolytic 3'-5' exoribonuclease that plays an important role in tRNA 3'-end maturation. Removes nucleotide residues following the 3'-CCA terminus of tRNAs; can also add nucleotides to the ends of RNA molecules by using nucleoside diphosphates as substrates, but this may not be physiologically important. Probably plays a role in initiation of 16S rRNA degradation (leading to ribosome degradation) during starvation. This chain is Ribonuclease PH, found in Nostoc sp. (strain PCC 7120 / SAG 25.82 / UTEX 2576).